The following is an 84-amino-acid chain: Exodeoxyribonuclease 7 small subunit (84 aa).

Belongs to the XseB family. As to quaternary structure, heterooligomer composed of large and small subunits.

The protein resides in the cytoplasm. The enzyme catalyses Exonucleolytic cleavage in either 5'- to 3'- or 3'- to 5'-direction to yield nucleoside 5'-phosphates.. Bidirectionally degrades single-stranded DNA into large acid-insoluble oligonucleotides, which are then degraded further into small acid-soluble oligonucleotides. The polypeptide is Exodeoxyribonuclease 7 small subunit (Bartonella bacilliformis (strain ATCC 35685 / KC583 / Herrer 020/F12,63)).